We begin with the raw amino-acid sequence, 167 residues long: Signal peptidase complex catalytic subunit SEC11 (167 aa).

The Cytoplasmic portion of the chain corresponds to 1-6 (MNIRQQ). Residues 7-24 (LTKFLGLFLTLASAFMFW) traverse the membrane as a helical; Signal-anchor for type II membrane protein segment. The Lumenal segment spans residues 25–167 (KGLSVVTNSH…LALSSLLGSE (143 aa)). Residues S44, H83, and D109 each act as charge relay system in the active site. The segment at 153–164 (ALMGMLALSSLL) is C-terminal short (CTS) helix.

It belongs to the peptidase S26B family. In terms of assembly, component of the signal peptidase complex (SPC) composed of a catalytic subunit SEC11 and three accessory subunits SPC1, SPC2 and SPC3. The complex induces a local thinning of the ER membrane which is used to measure the length of the signal peptide (SP) h-region of protein substrates. This ensures the selectivity of the complex towards h-regions shorter than 18-20 amino acids. SPC associates with the translocon complex.

The protein localises to the endoplasmic reticulum membrane. It carries out the reaction Cleavage of hydrophobic, N-terminal signal or leader sequences from secreted and periplasmic proteins.. Catalytic component of the signal peptidase complex (SPC) which catalyzes the cleavage of N-terminal signal sequences from nascent proteins as they are translocated into the lumen of the endoplasmic reticulum. Specifically cleaves N-terminal signal peptides that contain a hydrophobic alpha-helix (h-region) shorter than 18-20 amino acids. In Eremothecium gossypii (strain ATCC 10895 / CBS 109.51 / FGSC 9923 / NRRL Y-1056) (Yeast), this protein is Signal peptidase complex catalytic subunit SEC11 (SEC11).